A 245-amino-acid chain; its full sequence is Ribosomal RNA large subunit methyltransferase E (245 aa).

Gly-83, Trp-85, Asp-111, Asp-127, and Asp-156 together coordinate S-adenosyl-L-methionine. The active-site Proton acceptor is Lys-196.

It belongs to the class I-like SAM-binding methyltransferase superfamily. RNA methyltransferase RlmE family.

It is found in the cytoplasm. The catalysed reaction is uridine(2552) in 23S rRNA + S-adenosyl-L-methionine = 2'-O-methyluridine(2552) in 23S rRNA + S-adenosyl-L-homocysteine + H(+). In terms of biological role, specifically methylates the uridine in position 2552 of 23S rRNA at the 2'-O position of the ribose in the fully assembled 50S ribosomal subunit. This Polaromonas naphthalenivorans (strain CJ2) protein is Ribosomal RNA large subunit methyltransferase E.